Reading from the N-terminus, the 647-residue chain is MHSIEHIVARHFNYALEKTKDLPKSINNEITNEIIILKDYQYLVSRIFIGLSELNSLLLFWDTGYGKTLTSVYIMKHLKLVFPQWFFVIFIKKSLYVDPWLNTLSKLGMKGQNIKFVLYDSSSSLKQFNVLYRTIISSINTKNRILIIIDEVHQVISRTIEKSSSTQRNFLSIFNKIVKLANSENNKLLCMSATPITNNVLEFKYLINLLRPKIIEFKEDFIVNNTLKNHEQLKNGLISITSYQKISEADSFTNTSYTEGFASKNIFYHNVTMTPEQSNIFNIADKHDKKSALGGLKTMRRLVSSFAFYDIKIKGSMSQIEYNKMVSEKLNEFKSIIGNFKFSNEFIDIFRNNDSFSNAKSSEIEIFDKIKQYSCKYIEACKIILNSNGKVLLYEPLVSFEGISTLKIYFNIFNISYVEYSSKTESTRDYNIDIFNKYDNLYGNKIKVCIFSAAGSEGISFSSINDIIILDLPWKESDIKQIIGRSIRLNSHEELPIEKRYVNVHFIIASTIDGKSVDKEIFDLIKSKQDKINVLNSFMKVISIEQIHSKYKYAEPVENEYIFNNIRHTKIDDVNENNVITKIIVSPIYYCSEDNLNIIYNGYLDKKTGIIYSNNIPIAKLILDENNIYKFFIKDDKLVYITKSIYE.

In terms of domain architecture, Helicase ATP-binding spans 48 to 213 (FIGLSELNSL…KYLINLLRPK (166 aa)). Residue 61–68 (WDTGYGKT) participates in ATP binding. Positions 150–153 (DEVH) match the DEXH box motif. Positions 377–540 (YIEACKIILN…KINVLNSFMK (164 aa)) constitute a Helicase C-terminal domain. The interval 466–532 (DIIILDLPWK…DLIKSKQDKI (67 aa)) is binding to the cap-specific mRNA (nucleoside-2'-O-)-methyltransferase.

This sequence belongs to the helicase family. NPH I subfamily. In terms of assembly, monomer. Interacts (via C-terminus) with RAP94 (via N-terminus). Interacts with the cap-specific mRNA (nucleoside-2'-O-)-methyltransferase.

It localises to the virion. The enzyme catalyses a ribonucleoside 5'-triphosphate + H2O = a ribonucleoside 5'-diphosphate + phosphate + H(+). In terms of biological role, DNA-dependent ATPase required for providing the needed energy to achieve the termination of early transcripts. Acts in concert with the RAP94 subunit of the virion RNA polymerase and the capping enzyme/VTF to catalyze release of UUUUUNU-containing nascent RNA from the elongation complex. NPH-I must bind ssDNA in order to exhibit ATPase activity. In Melanoplus sanguinipes entomopoxvirus (MsEPV), this protein is Nucleoside triphosphatase I (NPH1).